Consider the following 82-residue polypeptide: Chlorosome protein E (82 aa).

Residue H26 coordinates a bacteriochlorophyll c. Positions 55–82 (GSSGLKGSSPKYSGYATPSKEVKSRFEK) are disordered. A compositionally biased stretch (low complexity) spans 59–69 (LKGSSPKYSGY).

It belongs to the BChl C/E-binding protein family.

It localises to the chlorosome. The protein localises to the chlorosome envelope. In terms of biological role, component of the photosynthetic apparatus. The light harvesting B740 complex binds bacteriochlorophyll c. The protein is Chlorosome protein E (csmE) of Chlorobaculum tepidum (strain ATCC 49652 / DSM 12025 / NBRC 103806 / TLS) (Chlorobium tepidum).